A 1369-amino-acid chain; its full sequence is Serine/threonine-protein kinase SIK3 (1369 aa).

Residues 26–55 (LLPPPAAGPPAAPAAVPPAAVPARPTAPAS) are disordered. Over residues 27–45 (LPPPAAGPPAAPAAVPPAA) the composition is skewed to pro residues. A compositionally biased stretch (low complexity) spans 46–55 (VPARPTAPAS). The region spanning 66-317 (YEIDRTIGKG…MEQICRHKWM (252 aa)) is the Protein kinase domain. Thr-71 carries the phosphothreonine modification. ATP contacts are provided by residues 72 to 80 (IGKGNFAVV) and Lys-95. The Proton acceptor role is filled by Asp-188. Phosphothreonine is present on Thr-221. Residues 344–384 (PLNDDVLLAMEDMGLDKERTLQSLRSDAYDHYSAIYSLLCD) enclose the UBA domain. A Phosphothreonine modification is found at Thr-469. Phosphoserine is present on residues Ser-551, Ser-591, Ser-592, Ser-674, and Ser-695. The disordered stretch occupies residues 775 to 821 (IQPSSPPPNHPSNHLFRQPSNSPPPVSSAMITSHGATSPSQFQGLPS). The segment covering 803–818 (AMITSHGATSPSQFQG) has biased composition (polar residues). Ser-914 bears the Phosphoserine mark. The disordered stretch occupies residues 942–993 (LFSDQSRGSPSSYSPSTGVGFPPTQALKVPPLDQFPTFPPSAQQQPPHYTTS). The segment covering 944 to 957 (SDQSRGSPSSYSPS) has biased composition (low complexity). The segment covering 981–993 (PSAQQQPPHYTTS) has biased composition (polar residues). Ser-1026 is subject to Phosphoserine. Position 1034 is an omega-N-methylarginine (Arg-1034). The disordered stretch occupies residues 1314–1338 (DEEDEECGVSLGHEHPGLGDGSQHL).

Belongs to the protein kinase superfamily. CAMK Ser/Thr protein kinase family. SNF1 subfamily. In terms of assembly, binds to and is activated by YWHAZ when phosphorylated on Thr-221. Interacts with 14-3-3 proteins. Interacts with HDAC4; this interaction leads to HDAC4 retention in the cytoplasm. Interacts with DEPTOR, MLST8/GbetaL, RICTOR and RPTOR. Requires Mg(2+) as cofactor. Phosphorylated at Thr-221 by STK11/LKB1 in complex with STE20-related adapter-alpha (STRADA) pseudo kinase and CAB39. Expressed in hypertrophic chondrocytes in the growth plate.

Its subcellular location is the cytoplasm. It catalyses the reaction L-seryl-[protein] + ATP = O-phospho-L-seryl-[protein] + ADP + H(+). The enzyme catalyses L-threonyl-[protein] + ATP = O-phospho-L-threonyl-[protein] + ADP + H(+). With respect to regulation, activated by phosphorylation on Thr-221. Functionally, positive regulator of mTOR signaling that functions by triggering the degradation of DEPTOR, an mTOR inhibitor. Required for chondrocyte hypertrophy during skeletogenesis. Negatively regulates cAMP signaling pathway possibly by acting on CRTC2/TORC2 and CRTC3/TORC3. Prevents HDAC4 translocation to the nucleus. This chain is Serine/threonine-protein kinase SIK3 (Sik3), found in Mus musculus (Mouse).